The sequence spans 250 residues: Hydroxyacylglutathione hydrolase (250 aa).

Zn(2+)-binding residues include His-53, His-55, Asp-57, His-58, His-110, Asp-127, and His-165.

Belongs to the metallo-beta-lactamase superfamily. Glyoxalase II family. Monomer. It depends on Zn(2+) as a cofactor.

It catalyses the reaction an S-(2-hydroxyacyl)glutathione + H2O = a 2-hydroxy carboxylate + glutathione + H(+). It functions in the pathway secondary metabolite metabolism; methylglyoxal degradation; (R)-lactate from methylglyoxal: step 2/2. Its function is as follows. Thiolesterase that catalyzes the hydrolysis of S-D-lactoyl-glutathione to form glutathione and D-lactic acid. The chain is Hydroxyacylglutathione hydrolase from Buchnera aphidicola subsp. Schizaphis graminum (strain Sg).